Here is a 229-residue protein sequence, read N- to C-terminus: Large ribosomal subunit protein uL1 (229 aa).

It belongs to the universal ribosomal protein uL1 family. In terms of assembly, part of the 50S ribosomal subunit.

Its function is as follows. Binds directly to 23S rRNA. The L1 stalk is quite mobile in the ribosome, and is involved in E site tRNA release. In terms of biological role, protein L1 is also a translational repressor protein, it controls the translation of the L11 operon by binding to its mRNA. This is Large ribosomal subunit protein uL1 from Rhodopseudomonas palustris (strain HaA2).